Here is a 220-residue protein sequence, read N- to C-terminus: Glutathione S-transferase (220 aa).

One can recognise a GST N-terminal domain in the interval 1-77 (MLKLHGFSVS…YIEQTQSGKA (77 aa)). Glutathione contacts are provided by residues Y12, V49, and 61 to 62 (ET). A GST C-terminal domain is found at 82–211 (DPFEQAKVRE…ADKEASMPAF (130 aa)).

It belongs to the GST superfamily. In terms of assembly, monomer and homodimer.

It is found in the cytoplasm. It catalyses the reaction RX + glutathione = an S-substituted glutathione + a halide anion + H(+). In terms of biological role, conjugation of reduced glutathione to a wide number of exogenous and endogenous hydrophobic electrophiles. The protein is Glutathione S-transferase of Pseudomonas putida (strain ATCC 700007 / DSM 6899 / JCM 31910 / BCRC 17059 / LMG 24140 / F1).